A 243-amino-acid polypeptide reads, in one-letter code: R-spondin-2 (243 aa).

The signal sequence occupies residues M1–C21. 11 disulfides stabilise this stretch: C40–C46, C43–C52, C55–C74, C78–C93, C96–C104, C101–C110, C113–C124, C128–C141, C145–C187, C156–C163, and C196–C203. The FU repeat unit spans residues M90–P134. Positions G144–P204 constitute a TSP type-1 domain. N-linked (GlcNAc...) asparagine glycosylation occurs at N160. Residues P204–L224 are compositionally biased toward basic residues. The segment at P204–Q243 is disordered.

Belongs to the R-spondin family. As to quaternary structure, interacts with WNT1. Binds heparin. Interacts with LGR4, LGR5 and LGR6. Interacts with E3 ubiquitin ligases RNF43 and ZNRF3.

It is found in the secreted. Functionally, activator of the canonical Wnt signaling pathway by acting as a ligand for LGR4-6 receptors. Upon binding to LGR4-6 (LGR4, LGR5 or LGR6), LGR4-6 associate with phosphorylated LRP6 and frizzled receptors that are activated by extracellular Wnt receptors, triggering the canonical Wnt signaling pathway to increase expression of target genes. Also regulates the canonical Wnt/beta-catenin-dependent pathway and non-canonical Wnt signaling by acting as an inhibitor of ZNRF3, an important regulator of the Wnt signaling pathway. During embryonic development, plays a crucial role in limb specification, amplifying the Wnt signaling pathway independently of LGR4-6 receptors, possibly by acting as a direct antagonistic ligand to RNF43 and ZNRF3, hence governing the number of limbs an embryo should form. This chain is R-spondin-2 (RSPO2), found in Homo sapiens (Human).